The sequence spans 801 residues: Ent-copalyl diphosphate synthase, chloroplastic (801 aa).

K241 provides a ligand contact to substrate. Mg(2+)-binding residues include D373 and D375. A DXDD motif motif is present at residues 373 to 376; the sequence is DIDD. K459 serves as a coordination point for substrate.

Belongs to the terpene synthase family. The cofactor is Mg(2+).

It localises to the plastid. The protein localises to the chloroplast. The catalysed reaction is (2E,6E,10E)-geranylgeranyl diphosphate = ent-copalyl diphosphate. It participates in plant hormone biosynthesis; gibberellin biosynthesis. Its function is as follows. Catalyzes the conversion of geranylgeranyl diphosphate to the gibberellin precursor ent-copalyl diphosphate. The chain is Ent-copalyl diphosphate synthase, chloroplastic from Pisum sativum (Garden pea).